The following is a 577-amino-acid chain: Proton channel OTOP3 (577 aa).

The tract at residues 1–46 (MASQTSAPAEPAPMPSPEAKTTEGASSYDQADMETKHAGSPCPPKQ) is disordered. Residues 1–69 (MASQTSAPAE…RDRQAQKAGQ (69 aa)) lie on the Cytoplasmic side of the membrane. Residues 70-90 (LFSGLLALNVVFLGGAFICSM) traverse the membrane as a helical segment. Over 91-100 (IFNKVSVTLG) the chain is Extracellular. A helical membrane pass occupies residues 101-124 (DVWILLAALKVLSLLWLLYYTVGT). Residues 125–140 (TRKPHAVLYRDPHAGP) are Cytoplasmic-facing. Residues 141–162 (IWVRGSLVLFGSCTVCLNIFRM) traverse the membrane as a helical segment. Over 163 to 174 (GYDVSHIHCKSE) the chain is Extracellular. A helical membrane pass occupies residues 175-198 (VELIFPAIEIVFMIIQTWVLWRHC). The Cytoplasmic segment spans residues 199 to 206 (KDCVQVQT). A helical membrane pass occupies residues 207-229 (NFTRCGLMLTLATNLLMWVLAVT). Residues 230–276 (NDSMHREIEAELDALMEKFSGNGTNTCMCLNTTVCEVFRKGYLMLYP) lie on the Extracellular side of the membrane. A helical transmembrane segment spans residues 277 to 293 (FSTEYCLICCAVLFVMW). The Cytoplasmic segment spans residues 294-319 (KNVSRSLAAHTGAHPNRSPFRLHGTI). The chain crosses the membrane as a helical span at residues 320-339 (FGPLLGLLALVAGVCVFVLF). Residues 340–353 (QIEASGPDIARQYF) lie on the Extracellular side of the membrane. Residues 354-376 (TLYYAFYVAVLPTMSLACLAGTA) traverse the membrane as a helical segment. The Cytoplasmic segment spans residues 377-394 (IHGLEERELDTLKNPTRS). A helical membrane pass occupies residues 395-416 (LDVVLLMGAALGQMGIAYFSIV). The Extracellular portion of the chain corresponds to 417–427 (AIVATQPHELL). A helical transmembrane segment spans residues 428–450 (NQLILAYSLLLILQHITQNLFII). The Cytoplasmic segment spans residues 451–510 (EGLHRRPLWEPAVSGVMEKQDVELPRRGSLRELGQDLRRASRAYIHSFSHLNWKRRMLKE). A helical membrane pass occupies residues 511–528 (ISLFLILCNITLWMMPAF). Over 529–547 (GIHPEFENGLEKDFYGYRT) the chain is Extracellular. Residues 548–570 (WFTIVNFGLPLGVFYRMHSVGGL) form a helical membrane-spanning segment. At 571–577 (VEVYLGA) the chain is on the cytoplasmic side.

The protein belongs to the otopetrin family. As to quaternary structure, homodimer. Expressed in epidermis, small intestine, stomach and retina.

The protein localises to the cell membrane. The catalysed reaction is H(+)(in) = H(+)(out). Its activity is regulated as follows. Activated by extracellular acidification. Activated by Zn(2+) under non-acidic conditions. Its function is as follows. Proton-selective channel gated by extracellular protons. The protein is Proton channel OTOP3 of Mus musculus (Mouse).